Reading from the N-terminus, the 450-residue chain is ADP-specific phosphofructokinase (450 aa).

The 449-residue stretch at 1-449 (MIPEHLSIYT…FLTYLEFLKR (449 aa)) folds into the ADPK domain. Mg(2+) is bound by residues Glu260, Glu290, and Asp433. Residue Asp433 is the Proton acceptor of the active site.

The protein belongs to the carbohydrate kinase PfkC family. It depends on Mg(2+) as a cofactor.

It localises to the cytoplasm. The catalysed reaction is beta-D-fructose 6-phosphate + ADP = beta-D-fructose 1,6-bisphosphate + AMP + H(+). It participates in carbohydrate degradation; glycolysis. In terms of biological role, catalyzes the phosphorylation of fructose 6-phosphate to fructose 1,6-bisphosphate using ADP as the phosphate donor. This is ADP-specific phosphofructokinase from Pyrococcus horikoshii (strain ATCC 700860 / DSM 12428 / JCM 9974 / NBRC 100139 / OT-3).